A 379-amino-acid chain; its full sequence is MAKEPVRVLVTGAAGNQEPILVKEESVVGIPTPLLKLKSWQWWVLVSVNIFFLIGGQAASVLLGRFYYDEGGNSKWMATLVQTAAFPILYIPLLLLPSSASVESSESSCSLKYIVLIYVLLGVIIAGDNMLYSVGLLYLSASTYSLICATQLAFNAVFSYFINAQKFTALILNSVVLLSFSAALIALNDDADTPSGVSRSKYIVGFVCTLAASALYSLLLSLMQFSFEKILKRETFSVVLEMQIYTSLVATCVSVIGLFASGEWRTLHGEMEGYHKGQASYVLTLVWTAVTWQVCSVGVVGLIFLVTSLFSNVISTLSLAVTPLAALVVFRDKMSGVKIMAMLIAIWGFASYVYQNHIDDLKVRQARQQAQAGRVEPPC.

10 helical membrane passes run 43–63, 76–96, 114–134, 144–164, 167–187, 203–223, 239–259, 294–313, 314–330, and 334–354; these read WVLV…SVLL, WMAT…LLLL, IVLI…LYSV, YSLI…FINA, FTAL…LIAL, IVGF…LSLM, VLEM…IGLF, VCSV…FSNV, ISTL…LVVF, and MSGV…SYVY.

Belongs to the purine permeases (TC 2.A.7.14) family. In terms of assembly, may form a complex with the potassium channel subunit KAT1.

The protein localises to the membrane. This is Probable purine permease 11 (PUP11) from Arabidopsis thaliana (Mouse-ear cress).